Reading from the N-terminus, the 243-residue chain is ATP synthase subunit b, mitochondrial (243 aa).

The protein belongs to the eukaryotic ATPase B chain family. As to quaternary structure, F-type ATPases have 2 components, CF(1) - the catalytic core - and CF(0) - the membrane proton channel. CF(1) has five subunits: alpha(3), beta(3), gamma(1), delta(1), epsilon(1). CF(0) has three main subunits: a, b and c.

The protein localises to the mitochondrion. Its subcellular location is the mitochondrion inner membrane. Its function is as follows. Mitochondrial membrane ATP synthase (F(1)F(0) ATP synthase or Complex V) produces ATP from ADP in the presence of a proton gradient across the membrane which is generated by electron transport complexes of the respiratory chain. F-type ATPases consist of two structural domains, F(1) - containing the extramembraneous catalytic core, and F(0) - containing the membrane proton channel, linked together by a central stalk and a peripheral stalk. During catalysis, ATP synthesis in the catalytic domain of F(1) is coupled via a rotary mechanism of the central stalk subunits to proton translocation. Part of the complex F(0) domain and the peripheric stalk, which acts as a stator to hold the catalytic alpha(3)beta(3) subcomplex and subunit a/ATP6 static relative to the rotary elements. This chain is ATP synthase subunit b, mitochondrial, found in Drosophila melanogaster (Fruit fly).